The sequence spans 445 residues: Lateral flagellar hook-associated protein 2 (445 aa).

Residues 388–423 (SGAFKSRKEALQANLDRLSDKQTTLERKYDMSYKRY) adopt a coiled-coil conformation.

It belongs to the FliD family. Homopentamer.

It is found in the secreted. The protein localises to the bacterial flagellum. In terms of biological role, required for the morphogenesis and for the elongation of the flagellar filament by facilitating polymerization of the flagellin monomers at the tip of growing filament. Forms a capping structure, which prevents flagellin subunits (transported through the central channel of the flagellum) from leaking out without polymerization at the distal end. Essential for swarming motility. In Vibrio parahaemolyticus serotype O3:K6 (strain RIMD 2210633), this protein is Lateral flagellar hook-associated protein 2 (fliDL).